The sequence spans 760 residues: Xaa-Pro dipeptidyl-peptidase (760 aa).

Catalysis depends on charge relay system residues S349, D469, and H499.

Belongs to the peptidase S15 family. In terms of assembly, homodimer.

Its subcellular location is the cytoplasm. It carries out the reaction Hydrolyzes Xaa-Pro-|- bonds to release unblocked, N-terminal dipeptides from substrates including Ala-Pro-|-p-nitroanilide and (sequentially) Tyr-Pro-|-Phe-Pro-|-Gly-Pro-|-Ile.. Removes N-terminal dipeptides sequentially from polypeptides having unsubstituted N-termini provided that the penultimate residue is proline. The protein is Xaa-Pro dipeptidyl-peptidase of Streptococcus pyogenes serotype M6 (strain ATCC BAA-946 / MGAS10394).